Reading from the N-terminus, the 304-residue chain is Acetyl-coenzyme A carboxylase carboxyl transferase subunit beta (304 aa).

A CoA carboxyltransferase N-terminal domain is found at 52-304 (EVTKCPSCGV…TIFKVLNDII (253 aa)). Residues C56, C59, C75, and C78 each coordinate Zn(2+). The C4-type zinc finger occupies 56–78 (CPSCGVLSHKSEIRANMKMCSNC).

This sequence belongs to the AccD/PCCB family. Acetyl-CoA carboxylase is a heterohexamer composed of biotin carboxyl carrier protein (AccB), biotin carboxylase (AccC) and two subunits each of ACCase subunit alpha (AccA) and ACCase subunit beta (AccD). Zn(2+) serves as cofactor.

Its subcellular location is the cytoplasm. The catalysed reaction is N(6)-carboxybiotinyl-L-lysyl-[protein] + acetyl-CoA = N(6)-biotinyl-L-lysyl-[protein] + malonyl-CoA. Its pathway is lipid metabolism; malonyl-CoA biosynthesis; malonyl-CoA from acetyl-CoA: step 1/1. Functionally, component of the acetyl coenzyme A carboxylase (ACC) complex. Biotin carboxylase (BC) catalyzes the carboxylation of biotin on its carrier protein (BCCP) and then the CO(2) group is transferred by the transcarboxylase to acetyl-CoA to form malonyl-CoA. In Fusobacterium nucleatum subsp. nucleatum (strain ATCC 25586 / DSM 15643 / BCRC 10681 / CIP 101130 / JCM 8532 / KCTC 2640 / LMG 13131 / VPI 4355), this protein is Acetyl-coenzyme A carboxylase carboxyl transferase subunit beta.